Here is a 238-residue protein sequence, read N- to C-terminus: Succinate dehydrogenase iron-sulfur subunit (238 aa).

The region spanning 1-97 (MKLEFSIYRY…KIVIRPLPGL (97 aa)) is the 2Fe-2S ferredoxin-type domain. [2Fe-2S] cluster contacts are provided by cysteine 55, cysteine 60, and cysteine 75. One can recognise a 4Fe-4S ferredoxin-type domain in the interval 139 to 169 (QREKLDGLYECILCACCSTSCPSFWWNPDKF). Cysteine 149, cysteine 152, and cysteine 155 together coordinate [4Fe-4S] cluster. Cysteine 159 contacts [3Fe-4S] cluster. Tryptophan 164 is an a ubiquinone binding site. [3Fe-4S] cluster contacts are provided by cysteine 206 and cysteine 212. Cysteine 216 serves as a coordination point for [4Fe-4S] cluster.

The protein belongs to the succinate dehydrogenase/fumarate reductase iron-sulfur protein family. In terms of assembly, part of an enzyme complex containing four subunits: a flavoprotein, an iron-sulfur, cytochrome b-556, and a hydrophobic anchor protein. [2Fe-2S] cluster serves as cofactor. Requires [3Fe-4S] cluster as cofactor. It depends on [4Fe-4S] cluster as a cofactor.

It carries out the reaction a quinone + succinate = fumarate + a quinol. It participates in carbohydrate metabolism; tricarboxylic acid cycle; fumarate from succinate (bacterial route): step 1/1. Functionally, two distinct, membrane-bound, FAD-containing enzymes are responsible for the catalysis of fumarate and succinate interconversion; the fumarate reductase is used in anaerobic growth, and the succinate dehydrogenase is used in aerobic growth. The protein is Succinate dehydrogenase iron-sulfur subunit (sdhB) of Salmonella typhimurium (strain LT2 / SGSC1412 / ATCC 700720).